The primary structure comprises 145 residues: Protein BUD31 homolog 3 (145 aa).

It belongs to the BUD31 (G10) family.

Its subcellular location is the nucleus. The protein is Protein BUD31 homolog 3 of Oryza sativa subsp. japonica (Rice).